Here is a 341-residue protein sequence, read N- to C-terminus: L-threonine 3-dehydrogenase (341 aa).

Cys-38 provides a ligand contact to Zn(2+). Residues Thr-40 and His-43 each act as charge relay system in the active site. Zn(2+) contacts are provided by His-63, Glu-64, Cys-93, Cys-96, Cys-99, and Cys-107. NAD(+)-binding positions include Ile-175, Asp-195, Arg-200, 262 to 264, and 286 to 287; these read LGI and IY.

Belongs to the zinc-containing alcohol dehydrogenase family. In terms of assembly, homotetramer. The cofactor is Zn(2+).

The protein localises to the cytoplasm. The enzyme catalyses L-threonine + NAD(+) = (2S)-2-amino-3-oxobutanoate + NADH + H(+). It participates in amino-acid degradation; L-threonine degradation via oxydo-reductase pathway; glycine from L-threonine: step 1/2. Its function is as follows. Catalyzes the NAD(+)-dependent oxidation of L-threonine to 2-amino-3-ketobutyrate. The polypeptide is L-threonine 3-dehydrogenase (Shigella dysenteriae serotype 1 (strain Sd197)).